Consider the following 307-residue polypeptide: Ribosomal RNA small subunit methyltransferase H (307 aa).

Residues 38–40, Asp-58, Phe-82, Asp-99, and Gln-106 contribute to the S-adenosyl-L-methionine site; that span reads GGH.

It belongs to the methyltransferase superfamily. RsmH family.

It localises to the cytoplasm. It carries out the reaction cytidine(1402) in 16S rRNA + S-adenosyl-L-methionine = N(4)-methylcytidine(1402) in 16S rRNA + S-adenosyl-L-homocysteine + H(+). Functionally, specifically methylates the N4 position of cytidine in position 1402 (C1402) of 16S rRNA. The polypeptide is Ribosomal RNA small subunit methyltransferase H (Variovorax paradoxus (strain S110)).